The following is a 511-amino-acid chain: Phosphoenolpyruvate carboxylase (511 aa).

Belongs to the PEPCase type 2 family. In terms of assembly, homotetramer. Mg(2+) serves as cofactor.

It catalyses the reaction oxaloacetate + phosphate = phosphoenolpyruvate + hydrogencarbonate. Allosterically inhibited by L-aspartate and L-malate. PEPC activity is not affected by allosteric activators of E.coli PEPC such as glucose 6-phosphate, fructose 1,6-bisphosphate, and acetyl coenzyme A. Its function is as follows. Catalyzes the irreversible beta-carboxylation of phosphoenolpyruvate (PEP) to form oxaloacetate (OAA), a four-carbon dicarboxylic acid source for the tricarboxylic acid cycle. The polypeptide is Phosphoenolpyruvate carboxylase (Saccharolobus solfataricus (strain ATCC 35092 / DSM 1617 / JCM 11322 / P2) (Sulfolobus solfataricus)).